We begin with the raw amino-acid sequence, 540 residues long: Chaperonin GroEL (540 aa).

Residues 29–32, 86–90, glycine 413, 476–478, and aspartate 492 each bind ATP; these read TLGP, DGTTT, and NAA.

It belongs to the chaperonin (HSP60) family. In terms of assembly, forms a cylinder of 14 subunits composed of two heptameric rings stacked back-to-back. Interacts with the co-chaperonin GroES.

The protein resides in the cytoplasm. It carries out the reaction ATP + H2O + a folded polypeptide = ADP + phosphate + an unfolded polypeptide.. Its function is as follows. Together with its co-chaperonin GroES, plays an essential role in assisting protein folding. The GroEL-GroES system forms a nano-cage that allows encapsulation of the non-native substrate proteins and provides a physical environment optimized to promote and accelerate protein folding. The chain is Chaperonin GroEL from Streptococcus gordonii.